A 117-amino-acid chain; its full sequence is Ribonuclease P protein component (117 aa).

It belongs to the RnpA family. Consists of a catalytic RNA component (M1 or rnpB) and a protein subunit.

The catalysed reaction is Endonucleolytic cleavage of RNA, removing 5'-extranucleotides from tRNA precursor.. RNaseP catalyzes the removal of the 5'-leader sequence from pre-tRNA to produce the mature 5'-terminus. It can also cleave other RNA substrates such as 4.5S RNA. The protein component plays an auxiliary but essential role in vivo by binding to the 5'-leader sequence and broadening the substrate specificity of the ribozyme. This is Ribonuclease P protein component from Nocardioides sp. (strain ATCC BAA-499 / JS614).